We begin with the raw amino-acid sequence, 205 residues long: Cyanate hydratase (205 aa).

Residues Arg133, Glu136, and Ser159 contribute to the active site.

Belongs to the cyanase family.

It catalyses the reaction cyanate + hydrogencarbonate + 3 H(+) = NH4(+) + 2 CO2. In terms of biological role, catalyzes the reaction of cyanate with bicarbonate to produce ammonia and carbon dioxide. This is Cyanate hydratase from Thalassiosira pseudonana (Marine diatom).